The primary structure comprises 1036 residues: Isoleucine--tRNA ligase (1036 aa).

A 'HIGH' region motif is present at residues 46 to 56; it reads PFATGLPHYGH. Residues 589–593 carry the 'KMSKS' region motif; sequence KMSKR. ATP is bound at residue lysine 592.

The protein belongs to the class-I aminoacyl-tRNA synthetase family. IleS type 2 subfamily. In terms of assembly, monomer. It depends on Zn(2+) as a cofactor.

It localises to the cytoplasm. The enzyme catalyses tRNA(Ile) + L-isoleucine + ATP = L-isoleucyl-tRNA(Ile) + AMP + diphosphate. Its function is as follows. Catalyzes the attachment of isoleucine to tRNA(Ile). As IleRS can inadvertently accommodate and process structurally similar amino acids such as valine, to avoid such errors it has two additional distinct tRNA(Ile)-dependent editing activities. One activity is designated as 'pretransfer' editing and involves the hydrolysis of activated Val-AMP. The other activity is designated 'posttransfer' editing and involves deacylation of mischarged Val-tRNA(Ile). This chain is Isoleucine--tRNA ligase, found in Chlamydia trachomatis serovar A (strain ATCC VR-571B / DSM 19440 / HAR-13).